A 477-amino-acid polypeptide reads, in one-letter code: Calcium/calmodulin-dependent protein kinase type 1G (477 aa).

Positions 23-277 (FIFMEVLGSG…CEKALRHPWI (255 aa)) constitute a Protein kinase domain. ATP is bound by residues 29–37 (LGSGAFSEV) and K52. D143 functions as the Proton acceptor in the catalytic mechanism. The tract at residues 277 to 317 (IDGNTALHRDIYPSVSLQIQKNFAKSKWRQAFNAAAVVHHM) is autoinhibitory domain. Residues 297 to 318 (KNFAKSKWRQAFNAAAVVHHMR) form a calmodulin-binding region. The tract at residues 326–388 (SPSVRQEVEN…SRPSAPSGGR (63 aa)) is disordered. The span at 376–388 (SHSSRPSAPSGGR) shows a compositional bias: low complexity.

Belongs to the protein kinase superfamily. CAMK Ser/Thr protein kinase family. CaMK subfamily. May be prenylated on Cys-474. Highly expressed in brain, in neuronal cell bodies of the central nucleus of amygdala and ventromedial hypothalamic nucleus. Also detected in heart, testis, and kidney.

It is found in the cytoplasm. The protein resides in the golgi apparatus membrane. It localises to the cell membrane. The catalysed reaction is L-seryl-[protein] + ATP = O-phospho-L-seryl-[protein] + ADP + H(+). The enzyme catalyses L-threonyl-[protein] + ATP = O-phospho-L-threonyl-[protein] + ADP + H(+). Its activity is regulated as follows. Activated by Ca(2+)/calmodulin. Binding of calmodulin is thought to result in a conformational change and leads to activation through phosphorylation by CAMKK1. In terms of biological role, calcium/calmodulin-dependent protein kinase belonging to a proposed calcium-triggered signaling cascade. In vitro phosphorylates transcription factor CREB1. The protein is Calcium/calmodulin-dependent protein kinase type 1G (Camk1g) of Mus musculus (Mouse).